We begin with the raw amino-acid sequence, 187 residues long: Biphenyl 2,3-dioxygenase subunit beta (187 aa).

This sequence belongs to the bacterial ring-hydroxylating dioxygenase beta subunit family. In terms of assembly, heterohexamer consisting of three BphA1 subunits and three BphA2 subunits. The multicomponent biphenyl dioxygenase system is composed of a ferredoxin reductase (BphA4), a ferredoxin (BphA3), and a terminal oxygenase (BphA1A2).

It carries out the reaction biphenyl + NADH + O2 + H(+) = (2R,3S)-3-phenylcyclohexa-3,5-diene-1,2-diol + NAD(+). It participates in xenobiotic degradation; biphenyl degradation; 2-hydroxy-2,4-pentadienoate and benzoate from biphenyl: step 1/4. Functionally, part of the oxygenase component of the biphenyl dioxygenase system that catalyzes the stereospecific dihydroxylation of the aromatic ring of biphenyl, yielding a dihydrodiol compound. Is likely involved in biphenyl degradation that allows growth of Rhodococcus sp. strain RHA1 on biphenyl as the sole source of carbon and energy. Can also use naphtalene and 4-chlorobiphenyl (4-CB) as substrates, as well as some polychlorinated biphenyls (PCB) such as 2,2'-dichlorobiphenyl, 2,3-dichlorobiphenyl and 2,5,2'-trichlorobiphenyl. Exhibits weak activity toward dibenzofuran and dibenzo-p-dioxin. Electrons are transferred from NADH to the [2Fe-2S] cluster in BphA1 via FAD of BphA4 and [2Fe-2S] cluster of BphA3. The polypeptide is Biphenyl 2,3-dioxygenase subunit beta (Rhodococcus jostii (strain RHA1)).